Consider the following 627-residue polypeptide: Transketolase-like protein 2 (627 aa).

His-39 contacts substrate. Residues Ser-42, His-79, and 125–127 contribute to the thiamine diphosphate site; that span reads GSL. Asp-157 serves as a coordination point for Mg(2+). 2 residues coordinate thiamine diphosphate: Gly-158 and Asn-187. Asn-187 and Leu-189 together coordinate Mg(2+). Positions 249 and 263 each coordinate thiamine diphosphate. Residues His-263, Arg-323, and Ser-350 each coordinate substrate. Positions 371 and 397 each coordinate thiamine diphosphate. Residue Glu-371 is the Proton donor of the active site. Substrate-binding residues include His-421 and Asp-429. Thiamine diphosphate is bound at residue Gln-433. Arg-479 contributes to the substrate binding site.

This sequence belongs to the transketolase family. In terms of assembly, homodimer. The cofactor is Mg(2+). Ca(2+) serves as cofactor. Requires Mn(2+) as cofactor. Co(2+) is required as a cofactor. It depends on thiamine diphosphate as a cofactor.

It carries out the reaction D-sedoheptulose 7-phosphate + D-glyceraldehyde 3-phosphate = aldehydo-D-ribose 5-phosphate + D-xylulose 5-phosphate. Functionally, plays an essential role in total transketolase activity and cell proliferation in cancer cells; after transfection with anti-TKTL1 siRNA, total transketolase activity dramatically decreases and proliferation was significantly inhibited in cancer cells. Plays a pivotal role in carcinogenesis. This chain is Transketolase-like protein 2 (Tktl2), found in Mus musculus (Mouse).